The following is a 378-amino-acid chain: Cytochrome b (378 aa).

The next 4 membrane-spanning stretches (helical) occupy residues 34–54, 78–99, 114–134, and 179–199; these read FGSLLFLCLMIQILTGLFLAM, WLLRTMHANGASFFFICIYLHV, WLVGVIILFLVMGTAFMGYVL, and FFTFHFILPFIVLAATLIHIL. Heme b contacts are provided by His-84 and His-98. His-183 and His-197 together coordinate heme b. His-202 serves as a coordination point for a ubiquinone. Helical transmembrane passes span 227–247, 289–309, 321–341, and 348–368; these read FKDIVGFIMMTMILILLVLIN, LGGVIALVLSIAILAILPFYH, INQILFWIMVVTVILLTWIGA, and YVLVGQILTVIYFSYFMFNPL.

The protein belongs to the cytochrome b family. The main subunits of complex b-c1 are: cytochrome b, cytochrome c1 and the Rieske protein. The cofactor is heme b.

The protein resides in the mitochondrion inner membrane. Component of the ubiquinol-cytochrome c reductase complex (complex III or cytochrome b-c1 complex) that is part of the mitochondrial respiratory chain. The b-c1 complex mediates electron transfer from ubiquinol to cytochrome c. Contributes to the generation of a proton gradient across the mitochondrial membrane that is then used for ATP synthesis. In Cochliomyia hominivorax (Primary screw-worm), this protein is Cytochrome b (MT-CYB).